The following is a 281-amino-acid chain: MSRPAGRTDWAEEDDETELALPSQTVVKNKDGSETITTYRVGEDGRRYKTTRRIKKTVIKTTVNPRVAERKQWAKFGQEKGKPAGPQTDTVSVAENILFRPVAAWKASNEDKGDEAKKKAELKNAKIKCRICQGDHFTTKCPFKDTMAPEGDVAPADMPDDAPGSASGGLGAGGGGYVPPHLRGRAGAGEKMGGKFDRDDSATLRVTNVSEFAEEQDLRDMFSRYGHVTRVFLAKDRETGRAKGFAFVSYADRTDAAKACEKMDGFGFGHLILRVEFAKKA.

Residues 1–32 (MSRPAGRTDWAEEDDETELALPSQTVVKNKDG) form a disordered region. The 79-residue stretch at 202 to 280 (ATLRVTNVSE…LILRVEFAKK (79 aa)) folds into the RRM domain.

It belongs to the eIF-3 subunit G family. In terms of assembly, component of the eukaryotic translation initiation factor 3 (eIF-3) complex.

Its subcellular location is the cytoplasm. Its function is as follows. RNA-binding component of the eukaryotic translation initiation factor 3 (eIF-3) complex, which is involved in protein synthesis of a specialized repertoire of mRNAs and, together with other initiation factors, stimulates binding of mRNA and methionyl-tRNAi to the 40S ribosome. The eIF-3 complex specifically targets and initiates translation of a subset of mRNAs involved in cell proliferation. This subunit can bind 18S rRNA. This is Eukaryotic translation initiation factor 3 subunit G from Phaeosphaeria nodorum (strain SN15 / ATCC MYA-4574 / FGSC 10173) (Glume blotch fungus).